The following is a 77-amino-acid chain: MADKSDSEAVALLMEAIVTTPDTNSEPQYQSQHRDLQECYYSDSDNEKATEFLRRIGKHQHKKKNSVKKRVTFLVYF.

Positions 12–13 (LL) match the Di-leucine internalization motif motif.

This sequence belongs to the alphaherpesvirinae envelope protein US9 family.

In Chlorocebus aethiops (Green monkey), this protein is Envelope protein US9 homolog.